The chain runs to 70 residues: Small ribosomal subunit protein bS21 (70 aa).

It belongs to the bacterial ribosomal protein bS21 family.

The sequence is that of Small ribosomal subunit protein bS21 from Paracidovorax citrulli (strain AAC00-1) (Acidovorax citrulli).